A 702-amino-acid chain; its full sequence is MTSRNQLVQKVLQELQEAVECEGLEGLIGASLEAKQVLSSFTLPTCREGGPGLQVLEVDSVALSLYPEDAPRNMLPLVCKGEGSLLFEAASMLLWGDAGLSLELRARTVVEMLLHRHYYLQGMIDSKVMLQAVRYSLCSEESPEMTSLPPATLEAIFDADVKASCFPSSFSNVWHLYALASVLQRNIYSIYPMRNLKIRPYFNRVIRPRRCDHVPSTLHIMWAGQPLTSHFFRHQYFAPVVGLEEVEAEGAPGVAPALPALAPLSSPAKTLELLNREPGLSYSHLCERYSVTKSTFYRWRRQSQEHRQKVAARFSAKHFLQDSFHRGGVVPLQQFLQRFPEISRSTYYAWKHELLGSGTCPALPPREVLGMEELEKLPEEQVAEEELECSALAVSSPGMVLMQRAKLYLEHCISLNTLVPYRCFKRRFPGISRSTYYNWRRKALRRNPSFKPAPALSAAGTPQLASVGEGAVIPWKSEAEEGAGNATGEDPPAPGELLPLRMPLSRWQRRLRRAARRQVLSGHLPFCRFRLRYPSLSPSAFWVWKSLARGWPRGLSKLQVPVPTLGKGGQEAEEKQEKEAGRDVTAVMAPPVGASSEDVEGGPSREGALQEGATAQGQPHSGPLLSQPVVAAAGGRDGRMLVMDMIATTKFKAQAKLFLQKRFQSKSFPSYKEFSALFPLTARSTYYMWKRALYDGLTLVDG.

The interval 562–625 (VPTLGKGGQE…QGQPHSGPLL (64 aa)) is disordered. Residues 570–582 (QEAEEKQEKEAGR) show a composition bias toward basic and acidic residues.

The protein belongs to the vertnin family.

The protein localises to the nucleus. Its function is as follows. Acts as a transcription factor that regulates development of thoracic vertebrae. This chain is Vertnin, found in Homo sapiens (Human).